The sequence spans 116 residues: Flagellar transcriptional regulator FlhD (116 aa).

Belongs to the FlhD family. Homodimer; disulfide-linked. Forms a heterohexamer composed of two FlhC and four FlhD subunits. Each FlhC binds a FlhD dimer, forming a heterotrimer, and a hexamer assembles by dimerization of two heterotrimers.

The protein resides in the cytoplasm. Its function is as follows. Functions in complex with FlhC as a master transcriptional regulator that regulates transcription of several flagellar and non-flagellar operons by binding to their promoter region. Activates expression of class 2 flagellar genes, including fliA, which is a flagellum-specific sigma factor that turns on the class 3 genes. Also regulates genes whose products function in a variety of physiological pathways. In Salmonella arizonae (strain ATCC BAA-731 / CDC346-86 / RSK2980), this protein is Flagellar transcriptional regulator FlhD.